Consider the following 178-residue polypeptide: MYHQLILLALIGTIMANVIPFSLSNISEEYKEFIPEEVRNFYKGLTAEDKEILRDLASKHATFANEDAALEALKDKSDKLYKNAVELRNFVKAKIDSLKPDAKAFVDEVIARARSLRSDDGQKFDTDKIKQAARDIIAKYQALNEETKEELKVTFPPIAKIISNEKLKRVASTFLQKN.

An N-terminal signal peptide occupies residues 1–16 (MYHQLILLALIGTIMA). 2 coiled-coil regions span residues 67–89 (DAAL…ELRN) and 129–154 (IKQA…LKVT).

This sequence belongs to the fatty-acid and retinol-binding protein (FARBP) family. Post-translationally, not glycosylated.

It localises to the secreted. Functionally, binds retinol and different fatty acids. The chain is Fatty-acid and retinol-binding protein 1 from Loa loa (Eye worm).